A 98-amino-acid polypeptide reads, in one-letter code: Keratin-associated protein 3-3 (98 aa).

Ala2 is subject to N-acetylalanine. 3 tandem repeats follow at residues 3–7, 8–12, and 47–51. The interval 3-59 is 3 X 5 AA repeats of C-C-X(3); it reads CCAPLCCSARTSPATTICSSDKFCRCGVCLPSTCPHTVWLLEPTCCDNCPPPCHIPQ.

It belongs to the KRTAP type 3 family. Interacts with hair keratins.

Functionally, in the hair cortex, hair keratin intermediate filaments are embedded in an interfilamentous matrix, consisting of hair keratin-associated proteins (KRTAP), which are essential for the formation of a rigid and resistant hair shaft through their extensive disulfide bond cross-linking with abundant cysteine residues of hair keratins. The matrix proteins include the high-sulfur and high-glycine-tyrosine keratins. The polypeptide is Keratin-associated protein 3-3 (Bos taurus (Bovine)).